The sequence spans 564 residues: Dihydroxy-acid dehydratase (564 aa).

Cysteine 55 contacts [2Fe-2S] cluster. Aspartate 87 lines the Mg(2+) pocket. Position 128 (cysteine 128) interacts with [2Fe-2S] cluster. The Mg(2+) site is built by aspartate 129 and lysine 130. Lysine 130 carries the post-translational modification N6-carboxylysine. Cysteine 200 serves as a coordination point for [2Fe-2S] cluster. Residue glutamate 452 coordinates Mg(2+). Serine 478 (proton acceptor) is an active-site residue.

This sequence belongs to the IlvD/Edd family. Homodimer. Requires [2Fe-2S] cluster as cofactor. Mg(2+) serves as cofactor.

The catalysed reaction is (2R)-2,3-dihydroxy-3-methylbutanoate = 3-methyl-2-oxobutanoate + H2O. It carries out the reaction (2R,3R)-2,3-dihydroxy-3-methylpentanoate = (S)-3-methyl-2-oxopentanoate + H2O. The protein operates within amino-acid biosynthesis; L-isoleucine biosynthesis; L-isoleucine from 2-oxobutanoate: step 3/4. It functions in the pathway amino-acid biosynthesis; L-valine biosynthesis; L-valine from pyruvate: step 3/4. In terms of biological role, functions in the biosynthesis of branched-chain amino acids. Catalyzes the dehydration of (2R,3R)-2,3-dihydroxy-3-methylpentanoate (2,3-dihydroxy-3-methylvalerate) into 2-oxo-3-methylpentanoate (2-oxo-3-methylvalerate) and of (2R)-2,3-dihydroxy-3-methylbutanoate (2,3-dihydroxyisovalerate) into 2-oxo-3-methylbutanoate (2-oxoisovalerate), the penultimate precursor to L-isoleucine and L-valine, respectively. The polypeptide is Dihydroxy-acid dehydratase (Polaromonas sp. (strain JS666 / ATCC BAA-500)).